The chain runs to 488 residues: Glutamyl-tRNA(Gln) amidotransferase subunit A (488 aa).

Catalysis depends on charge relay system residues Lys77 and Ser152. Ser176 acts as the Acyl-ester intermediate in catalysis.

Belongs to the amidase family. GatA subfamily. In terms of assembly, heterotrimer of A, B and C subunits.

It carries out the reaction L-glutamyl-tRNA(Gln) + L-glutamine + ATP + H2O = L-glutaminyl-tRNA(Gln) + L-glutamate + ADP + phosphate + H(+). Allows the formation of correctly charged Gln-tRNA(Gln) through the transamidation of misacylated Glu-tRNA(Gln) in organisms which lack glutaminyl-tRNA synthetase. The reaction takes place in the presence of glutamine and ATP through an activated gamma-phospho-Glu-tRNA(Gln). The polypeptide is Glutamyl-tRNA(Gln) amidotransferase subunit A (Streptococcus mutans serotype c (strain ATCC 700610 / UA159)).